The sequence spans 243 residues: Pyridoxine 5'-phosphate synthase (243 aa).

Asn9 lines the 3-amino-2-oxopropyl phosphate pocket. Residue 11 to 12 (DH) coordinates 1-deoxy-D-xylulose 5-phosphate. Arg20 provides a ligand contact to 3-amino-2-oxopropyl phosphate. His45 (proton acceptor) is an active-site residue. Residues Arg47 and His52 each contribute to the 1-deoxy-D-xylulose 5-phosphate site. The Proton acceptor role is filled by Glu72. Thr102 contributes to the 1-deoxy-D-xylulose 5-phosphate binding site. The active-site Proton donor is the His193. 3-amino-2-oxopropyl phosphate is bound by residues Gly194 and 215–216 (GH).

This sequence belongs to the PNP synthase family. In terms of assembly, homooctamer; tetramer of dimers.

It is found in the cytoplasm. The catalysed reaction is 3-amino-2-oxopropyl phosphate + 1-deoxy-D-xylulose 5-phosphate = pyridoxine 5'-phosphate + phosphate + 2 H2O + H(+). Its pathway is cofactor biosynthesis; pyridoxine 5'-phosphate biosynthesis; pyridoxine 5'-phosphate from D-erythrose 4-phosphate: step 5/5. Its function is as follows. Catalyzes the complicated ring closure reaction between the two acyclic compounds 1-deoxy-D-xylulose-5-phosphate (DXP) and 3-amino-2-oxopropyl phosphate (1-amino-acetone-3-phosphate or AAP) to form pyridoxine 5'-phosphate (PNP) and inorganic phosphate. This is Pyridoxine 5'-phosphate synthase from Pectobacterium atrosepticum (strain SCRI 1043 / ATCC BAA-672) (Erwinia carotovora subsp. atroseptica).